The chain runs to 916 residues: Translation initiation factor IF-2 (916 aa).

Residues 50–326 are disordered; the sequence is NRDKESTSQP…NSTLQQGFNK (277 aa). Positions 109 to 241 are enriched in basic and acidic residues; it reads AQREAEEKAR…LAEENAEKWT (133 aa). Basic residues predominate over residues 277 to 291; it reads GRGRAAKAPRPKKNN. Over residues 292 to 304 the composition is skewed to basic and acidic residues; the sequence is RHSEKADREEARA. The tr-type G domain maps to 415 to 584; the sequence is SRAPVVTIMG…LLQAEVLELK (170 aa). Residues 424–431 form a G1 region; it reads GHVDHGKT. 424–431 is a binding site for GTP; it reads GHVDHGKT. Residues 449–453 are G2; it reads GITQH. The G3 stretch occupies residues 470-473; that stretch reads DTPG. GTP-binding positions include 470 to 474 and 524 to 527; these read DTPGH and NKID. Residues 524-527 are G4; the sequence is NKID. A G5 region spans residues 560–562; it reads SAK.

The protein belongs to the TRAFAC class translation factor GTPase superfamily. Classic translation factor GTPase family. IF-2 subfamily.

The protein localises to the cytoplasm. One of the essential components for the initiation of protein synthesis. Protects formylmethionyl-tRNA from spontaneous hydrolysis and promotes its binding to the 30S ribosomal subunits. Also involved in the hydrolysis of GTP during the formation of the 70S ribosomal complex. The protein is Translation initiation factor IF-2 of Proteus mirabilis (strain HI4320).